The following is a 662-amino-acid chain: Carboxysome assembly protein CsoS2 (662 aa).

An N-terminal domain region spans residues 1 to 227; sequence MSTSNAQSGR…KRRNAKEAPQ (227 aa). Disordered regions lie at residues 1-258, 277-322, and 342-419; these read MSTS…SESG, NCDV…TCSA, and PAKS…RGSC. The stretch at 8 to 27 is one N-repeat 1 repeat; that stretch reads SGRAAAIARRNAQVKGKGYT. Low complexity-rich tracts occupy residues 28–57 and 64–76; these read ASAA…SQPS and SVAP…ASAA. Residues 58-72 form an N-repeat 2 repeat; the sequence is RSRRKVSVAPTATPA. The span at 120–135 shows a compositional bias: basic and acidic residues; sequence RQAKAEKPTKRSERRT. Residues 141–150 show a composition bias toward polar residues; that stretch reads VASQQPSGRL. One copy of the N-repeat 3 repeat lies at 147 to 168; sequence SGRLQSKAYRKAQAKGKAGQEA. Composition is skewed to low complexity over residues 161 to 170, 237 to 247, and 289 to 300; these read KGKAGQEAFK, GQSVSGTQVGQ, and VTQTQTTRGQVV. M-repeat repeat units follow at residues 228–278, 288–338, 388–436, 446–491, and 496–550; these read KVGE…SKNC, KVTQ…KMYC, KVMP…AKAC, KVTA…TEQF, and VDEQ…AMVC. Positions 228–559 are middle region; it reads KVGESQTLHG…CDSTNAAAPG (332 aa). Positions 391 to 404 are enriched in polar residues; the sequence is PSQTAKGNTTTGSQ. Positions 560–631 are C-terminal domain; it reads ESDFPAMIGQ…SPMGASQYRP (72 aa). One copy of the C-repeat 1 repeat lies at 564-572; that stretch reads PAMIGQAQP. Disordered regions lie at residues 588 to 607 and 619 to 662; these read KITG…DGPW and AGQS…GARA. Residues 632–662 form a C-terminal peptide region; it reads VNNEVPMSPITGSSGNTDTGAKVTLSGGARA. Residues 641–650 show a composition bias toward polar residues; it reads ITGSSGNTDT.

The protein belongs to the CsoS2 family. Interacts via its N-terminal repeats with RuBisCO. Interacts with the major shell protein CsoS1. In terms of processing, unlike H.neapolitanus and predictions for P.marinus strain MIT 9313, this protein is not thought to have ribosomal frameshifting.

The protein localises to the carboxysome. Its function is as follows. Required for alpha-carboxysome (Cb) assembly, mediates interaction between RuBisCO and the Cb shell. The protein is probably intrinsically disordered. The C-terminal repeats act as the encapsulation signal to target proteins to the Cb; they are necessary and sufficient to target both CsoS2 and foreign proteins to the Cb. The N-terminal repeats of this protein bind simultaneously to both subunits of RuBisCO. Probably also interacts with the major shell proteins (CsoS1); that interaction would increase the local concentration of CsoS2 so that it can condense RuBisCO and full carboxysomes can be formed. This chain is Carboxysome assembly protein CsoS2, found in Hydrogenovibrio crunogenus (strain DSM 25203 / XCL-2) (Thiomicrospira crunogena).